The chain runs to 489 residues: Aspartyl/glutamyl-tRNA(Asn/Gln) amidotransferase subunit B (489 aa).

This sequence belongs to the GatB/GatE family. GatB subfamily. Heterotrimer of A, B and C subunits.

It carries out the reaction L-glutamyl-tRNA(Gln) + L-glutamine + ATP + H2O = L-glutaminyl-tRNA(Gln) + L-glutamate + ADP + phosphate + H(+). The catalysed reaction is L-aspartyl-tRNA(Asn) + L-glutamine + ATP + H2O = L-asparaginyl-tRNA(Asn) + L-glutamate + ADP + phosphate + 2 H(+). Allows the formation of correctly charged Asn-tRNA(Asn) or Gln-tRNA(Gln) through the transamidation of misacylated Asp-tRNA(Asn) or Glu-tRNA(Gln) in organisms which lack either or both of asparaginyl-tRNA or glutaminyl-tRNA synthetases. The reaction takes place in the presence of glutamine and ATP through an activated phospho-Asp-tRNA(Asn) or phospho-Glu-tRNA(Gln). This Polynucleobacter asymbioticus (strain DSM 18221 / CIP 109841 / QLW-P1DMWA-1) (Polynucleobacter necessarius subsp. asymbioticus) protein is Aspartyl/glutamyl-tRNA(Asn/Gln) amidotransferase subunit B.